The following is a 417-amino-acid chain: Tyrosine--tRNA ligase (417 aa).

Position 36 (Y36) interacts with L-tyrosine. The 'HIGH' region motif lies at 41–50 (PTADSLHIGH). Y170 and Q174 together coordinate L-tyrosine. The 'KMSKS' region motif lies at 231-235 (KFGKS). Residue K234 participates in ATP binding. Residues 351–417 (TNLVELLIEA…GKKKYFMIIH (67 aa)) enclose the S4 RNA-binding domain.

This sequence belongs to the class-I aminoacyl-tRNA synthetase family. TyrS type 1 subfamily. As to quaternary structure, homodimer.

It localises to the cytoplasm. It catalyses the reaction tRNA(Tyr) + L-tyrosine + ATP = L-tyrosyl-tRNA(Tyr) + AMP + diphosphate + H(+). Functionally, catalyzes the attachment of tyrosine to tRNA(Tyr) in a two-step reaction: tyrosine is first activated by ATP to form Tyr-AMP and then transferred to the acceptor end of tRNA(Tyr). This Macrococcus caseolyticus (strain JCSC5402) (Macrococcoides caseolyticum) protein is Tyrosine--tRNA ligase.